A 204-amino-acid chain; its full sequence is Thymidylate kinase (204 aa).

12 to 19 (GVDGAGKS) contributes to the ATP binding site.

Belongs to the thymidylate kinase family.

It catalyses the reaction dTMP + ATP = dTDP + ADP. Its function is as follows. Phosphorylation of dTMP to form dTDP in both de novo and salvage pathways of dTTP synthesis. This Thiobacillus denitrificans (strain ATCC 25259 / T1) protein is Thymidylate kinase.